Consider the following 562-residue polypeptide: MNTNDAKEYLARREIPQLFESLLNGLMCSKPEDPVEYLESCLQKVKELGGCDKVKWDTFVSQEKKTLPPLNGGQSRRSFLRNVMPENSNFPYRRYDRLPPIHQFSIESDTDLSETAELIEEYEVFDPTRPRPKIILVIGGPGSGKGTQSLKIAERYGFQYISVGELLRKKIHSTSSNRKWSLIAKIITTGELAPQETTITEIKQKLMQIPDEEGIVIDGFPRDVAQALSFEDQICTPDLVVFLACANQRLKERLLKRAEQQGRPDDNVKATQRRLMNFKQNAAPLVKYFQEKGLIMTFDADRDEDEVFYDISMAVDNKLFPNKEAAAGSSDLDPSMILDTGEIIDTGSDYEDQGDDQLNVFGEDTMGGFMEDLRKCKIIFIIGGPGSGKGTQCEKLVEKYGFTHLSTGELLREELASESERSKLIRDIMERGDLVPSGIVLELLKEAMVASLGDTRGFLIDGYPREVKQGEEFGRRIGDPQLVICMDCSADTMTNRLLQRSRSSLPVDDTTKTIAKRLEAYYRASIPVIAYYETKTQLHKINAEGTPEDVFLQLCTAIDSIF.

2 adenylate kinase regions span residues 133–316 (KIIL…MAVD) and 377–559 (KIIF…TAID). 142–147 (GSGKGT) lines the ATP pocket. Residues 162 to 193 (SVGELLRKKIHSTSSNRKWSLIAKIITTGELA) form an NMP 1 region. AMP contacts are provided by residues Arg168, 191 to 193 (ELA), 219 to 222 (GFPR), and Gln226. Residues 256–266 (KRAEQQGRPDD) are LID 1. Arg257 serves as a coordination point for ATP. Residues Arg263 and Arg274 each coordinate AMP. 386–391 (GSGKGT) is an ATP binding site. Positions 406–435 (STGELLREELASESERSKLIRDIMERGDLV) are NMP 2. Residues Thr407, Arg412, 433–435 (DLV), 462–465 (GYPR), and Gln469 contribute to the AMP site. An LID 2 region spans residues 499 to 509 (QRSRSSLPVDD). Position 500 (Arg500) interacts with ATP. Arg517 serves as a coordination point for AMP. Gly545 serves as a coordination point for ATP.

Belongs to the adenylate kinase family. In terms of assembly, monomer. Interacts with YWHAZ. In terms of tissue distribution, brain specific.

It localises to the cytoplasm. It carries out the reaction AMP + ATP = 2 ADP. The catalysed reaction is a 2'-deoxyribonucleoside 5'-diphosphate + ATP = a 2'-deoxyribonucleoside 5'-triphosphate + ADP. It catalyses the reaction a ribonucleoside 5'-diphosphate + ATP = a ribonucleoside 5'-triphosphate + ADP. Functionally, nucleoside monophosphate (NMP) kinase that catalyzes the reversible transfer of the terminal phosphate group between nucleoside triphosphates and monophosphates. Active on AMP and dAMP with ATP as a donor. When GTP is used as phosphate donor, the enzyme phosphorylates AMP, CMP, and to a small extent dCMP. Also displays broad nucleoside diphosphate kinase activity. The protein is Adenylate kinase isoenzyme 5 (AK5) of Homo sapiens (Human).